A 389-amino-acid chain; its full sequence is Acetylornithine deacetylase (389 aa).

H85 contacts Zn(2+). Residue D87 is part of the active site. D117 is a Zn(2+) binding site. E149 is a catalytic residue. E150, E174, and H360 together coordinate Zn(2+).

This sequence belongs to the peptidase M20A family. ArgE subfamily. As to quaternary structure, homodimer. It depends on Zn(2+) as a cofactor. Co(2+) is required as a cofactor. Requires glutathione as cofactor.

Its subcellular location is the cytoplasm. The enzyme catalyses N(2)-acetyl-L-ornithine + H2O = L-ornithine + acetate. It functions in the pathway amino-acid biosynthesis; L-arginine biosynthesis; L-ornithine from N(2)-acetyl-L-ornithine (linear): step 1/1. Catalyzes the hydrolysis of the amide bond of N(2)-acetylated L-amino acids. Cleaves the acetyl group from N-acetyl-L-ornithine to form L-ornithine, an intermediate in L-arginine biosynthesis pathway, and a branchpoint in the synthesis of polyamines. This is Acetylornithine deacetylase from Yersinia pseudotuberculosis serotype O:1b (strain IP 31758).